Consider the following 61-residue polypeptide: DNA-directed RNA polymerase subunit Rpo10 (61 aa).

4 residues coordinate Zn(2+): C6, C9, C42, and C43.

It belongs to the archaeal Rpo10/eukaryotic RPB10 RNA polymerase subunit family. Part of the RNA polymerase complex. The cofactor is Zn(2+).

The protein resides in the cytoplasm. The catalysed reaction is RNA(n) + a ribonucleoside 5'-triphosphate = RNA(n+1) + diphosphate. In terms of biological role, DNA-dependent RNA polymerase (RNAP) catalyzes the transcription of DNA into RNA using the four ribonucleoside triphosphates as substrates. The protein is DNA-directed RNA polymerase subunit Rpo10 of Methanothrix thermoacetophila (strain DSM 6194 / JCM 14653 / NBRC 101360 / PT) (Methanosaeta thermophila).